We begin with the raw amino-acid sequence, 283 residues long: Bis(5'-nucleosyl)-tetraphosphatase, symmetrical (283 aa).

Belongs to the Ap4A hydrolase family.

It carries out the reaction P(1),P(4)-bis(5'-adenosyl) tetraphosphate + H2O = 2 ADP + 2 H(+). Hydrolyzes diadenosine 5',5'''-P1,P4-tetraphosphate to yield ADP. The chain is Bis(5'-nucleosyl)-tetraphosphatase, symmetrical from Serratia proteamaculans (strain 568).